We begin with the raw amino-acid sequence, 141 residues long: VLSAADKNNVKGIFTKIAGHAEEYGAEALERMFITYPSTKTYFPHFDLSHGSAQIKGHGKKVVAALIEAVNHIDDITGTLSKLSDLHAHKLRVDPVNFKLLGQCFLVVVAIHHPSALTPEVHASLDKFLCAVGTVLTAKYR.

The Globin domain occupies 1 to 141 (VLSAADKNNV…VGTVLTAKYR (141 aa)). Histidine 58 serves as a coordination point for O2. A heme b-binding site is contributed by histidine 87.

Belongs to the globin family. Heterotetramer of two alpha chains and two beta chains. As to expression, red blood cells.

In terms of biological role, involved in oxygen transport from the lung to the various peripheral tissues. This Phasianus colchicus colchicus (Black-necked pheasant) protein is Hemoglobin subunit alpha-A (HBAA).